Here is a 156-residue protein sequence, read N- to C-terminus: Small ribosomal subunit protein uS7 (156 aa).

Belongs to the universal ribosomal protein uS7 family. Part of the 30S ribosomal subunit. Contacts proteins S9 and S11.

One of the primary rRNA binding proteins, it binds directly to 16S rRNA where it nucleates assembly of the head domain of the 30S subunit. Is located at the subunit interface close to the decoding center, probably blocks exit of the E-site tRNA. This chain is Small ribosomal subunit protein uS7, found in Rhodospirillum rubrum (strain ATCC 11170 / ATH 1.1.1 / DSM 467 / LMG 4362 / NCIMB 8255 / S1).